Consider the following 512-residue polypeptide: MQGNVIHVDKLYKMMYTDNYETIKKYLEYTVIDKTENYSTSANLIPFIPLHQAIEARNIDIIKSIITVDNVNQPGHDDTYPIHIICKEPNMLAISYMLRSINQCSVFNTLVKIKDMFNYRNVEIAKIILTNRYKNIQDIDLKYIDKKSKDDIIEITKLLFSYGADINMVDRHGNSPLHYATENPDQRLTRLLLSKGANPNILNKTNKSPLYYSIESDNPDITMLLIDKFIFNNTDPILSHAIKHYRKPILHALIENGASINARDKYGNTPLHYAVSYCKDIDVIKLLLERGVDVNAKSYIRNLTPLHSSYLKSPRVLKLLLQYGADINSLDSYSLTPLTSVVLQYLCIECGRIVVSHICCLKRIKPDIENSLGFIDNIDAITSNKRLNQIRLKCEDELNRMASIKITNTYSFDVFVLCDNITLLCKLVNNSIIDDILINSFNIYKGIILKNIYRSRKRLYLIENTLYVLNNTFKPNYMWNRLPVELQNYIMEYIDDASLKVMHEYEKHKLKY.

8 ANK repeats span residues 45-73 (IPFI…NVNQ), 77-106 (DDTY…QCSV), 136-168 (IQDI…DINM), 172-201 (HGNS…NPNI), 205-236 (TNKS…NTDP), 238-262 (LSHA…SINA), 266-296 (YGNT…DVNA), and 301-329 (RNLT…DINS).

This chain is Putative ankyrin repeat protein FPV233, found in Vertebrata (FPV).